The chain runs to 401 residues: Phosphoglycerate kinase, cytosolic (401 aa).

The (2R)-3-phosphoglycerate site is built by A24, D25, N27, R41, S63, H64, G66, R67, R122, H154, and R155. G200 contributes to the ADP binding site. G200 lines the CDP pocket. 2 residues coordinate AMP: K202 and K206. ATP is bound at residue K206. An ADP-binding site is contributed by G224. G224 serves as a coordination point for CDP. AMP-binding residues include G225 and G297. Residues G225 and G297 each contribute to the ATP site. CDP is bound by residues G322 and F327. F327 lines the ADP pocket. E328 is an AMP binding site. ATP is bound by residues E328, D359, and S360. D359 contacts Mg(2+).

It belongs to the phosphoglycerate kinase family. Monomer. Mg(2+) is required as a cofactor.

The protein resides in the cytoplasm. It carries out the reaction (2R)-3-phosphoglycerate + ATP = (2R)-3-phospho-glyceroyl phosphate + ADP. It participates in carbohydrate degradation; glycolysis; pyruvate from D-glyceraldehyde 3-phosphate: step 2/5. In Triticum aestivum (Wheat), this protein is Phosphoglycerate kinase, cytosolic.